We begin with the raw amino-acid sequence, 165 residues long: UPF0114 protein in repA1-repA2 intergenic region (165 aa).

The next 3 helical transmembrane spans lie at 15-35 (LMFPVYIGLAFGFVLLTVKFF), 53-73 (LVLIVLSLIDIALVGGLLVMV), and 136-156 (IMWCVVIHLTFVLSAFGMAYI).

This sequence belongs to the UPF0114 family.

It localises to the cell membrane. This Buchnera aphidicola subsp. Thelaxes suberi protein is UPF0114 protein in repA1-repA2 intergenic region.